Here is a 218-residue protein sequence, read N- to C-terminus: Octanoyltransferase (218 aa).

One can recognise a BPL/LPL catalytic domain in the interval 34–209 (ETSRDELWIV…TFSQELGYQH (176 aa)). Substrate is bound by residues 73–80 (RGGQVTYH), 140–142 (SLG), and 153–155 (GLA). C171 (acyl-thioester intermediate) is an active-site residue.

The protein belongs to the LipB family.

It is found in the cytoplasm. It catalyses the reaction octanoyl-[ACP] + L-lysyl-[protein] = N(6)-octanoyl-L-lysyl-[protein] + holo-[ACP] + H(+). The protein operates within protein modification; protein lipoylation via endogenous pathway; protein N(6)-(lipoyl)lysine from octanoyl-[acyl-carrier-protein]: step 1/2. In terms of biological role, catalyzes the transfer of endogenously produced octanoic acid from octanoyl-acyl-carrier-protein onto the lipoyl domains of lipoate-dependent enzymes. Lipoyl-ACP can also act as a substrate although octanoyl-ACP is likely to be the physiological substrate. The sequence is that of Octanoyltransferase from Shewanella loihica (strain ATCC BAA-1088 / PV-4).